The chain runs to 115 residues: Large ribosomal subunit protein bL20c (115 aa).

It belongs to the bacterial ribosomal protein bL20 family.

The protein resides in the plastid. It is found in the chloroplast. In terms of biological role, binds directly to 23S ribosomal RNA and is necessary for the in vitro assembly process of the 50S ribosomal subunit. It is not involved in the protein synthesizing functions of that subunit. The sequence is that of Large ribosomal subunit protein bL20c from Emiliania huxleyi (Coccolithophore).